We begin with the raw amino-acid sequence, 874 residues long: Alanine--tRNA ligase (874 aa).

The Zn(2+) site is built by H561, H565, C663, and H667.

Belongs to the class-II aminoacyl-tRNA synthetase family. It depends on Zn(2+) as a cofactor.

It is found in the cytoplasm. The enzyme catalyses tRNA(Ala) + L-alanine + ATP = L-alanyl-tRNA(Ala) + AMP + diphosphate. Functionally, catalyzes the attachment of alanine to tRNA(Ala) in a two-step reaction: alanine is first activated by ATP to form Ala-AMP and then transferred to the acceptor end of tRNA(Ala). Also edits incorrectly charged Ser-tRNA(Ala) and Gly-tRNA(Ala) via its editing domain. The protein is Alanine--tRNA ligase of Trichodesmium erythraeum (strain IMS101).